The following is a 97-amino-acid chain: Small ribosomal subunit protein bS20 (97 aa).

Belongs to the bacterial ribosomal protein bS20 family.

In terms of biological role, binds directly to 16S ribosomal RNA. The protein is Small ribosomal subunit protein bS20 of Prochlorococcus marinus (strain AS9601).